The sequence spans 278 residues: Large ribosomal subunit protein uL2 (278 aa).

The interval methionine 226–glycine 278 is disordered.

The protein belongs to the universal ribosomal protein uL2 family. Part of the 50S ribosomal subunit. Forms a bridge to the 30S subunit in the 70S ribosome.

Its function is as follows. One of the primary rRNA binding proteins. Required for association of the 30S and 50S subunits to form the 70S ribosome, for tRNA binding and peptide bond formation. It has been suggested to have peptidyltransferase activity; this is somewhat controversial. Makes several contacts with the 16S rRNA in the 70S ribosome. This Nitrosomonas europaea (strain ATCC 19718 / CIP 103999 / KCTC 2705 / NBRC 14298) protein is Large ribosomal subunit protein uL2.